We begin with the raw amino-acid sequence, 154 residues long: 6,7-dimethyl-8-ribityllumazine synthase (154 aa).

5-amino-6-(D-ribitylamino)uracil-binding positions include Phe21, 55–57 (AFE), and 79–81 (CVI). 84 to 85 (AT) is a binding site for (2S)-2-hydroxy-3-oxobutyl phosphate. The active-site Proton donor is the His87. Phe111 contributes to the 5-amino-6-(D-ribitylamino)uracil binding site. Position 125 (Arg125) interacts with (2S)-2-hydroxy-3-oxobutyl phosphate.

The protein belongs to the DMRL synthase family. As to quaternary structure, forms an icosahedral capsid composed of 60 subunits, arranged as a dodecamer of pentamers.

The enzyme catalyses (2S)-2-hydroxy-3-oxobutyl phosphate + 5-amino-6-(D-ribitylamino)uracil = 6,7-dimethyl-8-(1-D-ribityl)lumazine + phosphate + 2 H2O + H(+). Its pathway is cofactor biosynthesis; riboflavin biosynthesis; riboflavin from 2-hydroxy-3-oxobutyl phosphate and 5-amino-6-(D-ribitylamino)uracil: step 1/2. Its function is as follows. Catalyzes the formation of 6,7-dimethyl-8-ribityllumazine by condensation of 5-amino-6-(D-ribitylamino)uracil with 3,4-dihydroxy-2-butanone 4-phosphate. This is the penultimate step in the biosynthesis of riboflavin. The chain is 6,7-dimethyl-8-ribityllumazine synthase from Macrococcus caseolyticus (strain JCSC5402) (Macrococcoides caseolyticum).